Here is a 485-residue protein sequence, read N- to C-terminus: Glutamate--tRNA ligase (485 aa).

A 'HIGH' region motif is present at residues 12–22; the sequence is PSPTGEPHVGT. 4 residues coordinate Zn(2+): Cys-109, Cys-111, Cys-136, and His-138. The 'KMSKS' region signature appears at 253–257; that stretch reads KLSKR. Lys-256 lines the ATP pocket.

It belongs to the class-I aminoacyl-tRNA synthetase family. Glutamate--tRNA ligase type 1 subfamily. In terms of assembly, monomer. Requires Zn(2+) as cofactor.

Its subcellular location is the cytoplasm. It catalyses the reaction tRNA(Glu) + L-glutamate + ATP = L-glutamyl-tRNA(Glu) + AMP + diphosphate. In terms of biological role, catalyzes the attachment of glutamate to tRNA(Glu) in a two-step reaction: glutamate is first activated by ATP to form Glu-AMP and then transferred to the acceptor end of tRNA(Glu). The polypeptide is Glutamate--tRNA ligase (Agrobacterium fabrum (strain C58 / ATCC 33970) (Agrobacterium tumefaciens (strain C58))).